Consider the following 116-residue polypeptide: Large ribosomal subunit protein bL21c (116 aa).

Belongs to the bacterial ribosomal protein bL21 family. In terms of assembly, part of the 50S ribosomal subunit.

The protein resides in the plastid. Its subcellular location is the chloroplast. Functionally, this protein binds to 23S rRNA. This chain is Large ribosomal subunit protein bL21c, found in Marchantia polymorpha (Common liverwort).